The following is a 208-amino-acid chain: Pyridoxine/pyridoxamine 5'-phosphate oxidase (208 aa).

Residues 55-60, 70-71, K76, K77, and Q99 each bind FMN; these read RMVLLK and YT. Residue K60 coordinates substrate. Positions 117, 121, and 125 each coordinate substrate. Residues 134–135 and W179 each bind FMN; that span reads QS. 185–187 contacts substrate; that stretch reads RLH. Position 189 (R189) interacts with FMN.

This sequence belongs to the pyridoxamine 5'-phosphate oxidase family. As to quaternary structure, homodimer. FMN is required as a cofactor.

It catalyses the reaction pyridoxamine 5'-phosphate + O2 + H2O = pyridoxal 5'-phosphate + H2O2 + NH4(+). The catalysed reaction is pyridoxine 5'-phosphate + O2 = pyridoxal 5'-phosphate + H2O2. The protein operates within cofactor metabolism; pyridoxal 5'-phosphate salvage; pyridoxal 5'-phosphate from pyridoxamine 5'-phosphate: step 1/1. Its pathway is cofactor metabolism; pyridoxal 5'-phosphate salvage; pyridoxal 5'-phosphate from pyridoxine 5'-phosphate: step 1/1. Catalyzes the oxidation of either pyridoxine 5'-phosphate (PNP) or pyridoxamine 5'-phosphate (PMP) into pyridoxal 5'-phosphate (PLP). This is Pyridoxine/pyridoxamine 5'-phosphate oxidase from Brucella ovis (strain ATCC 25840 / 63/290 / NCTC 10512).